Reading from the N-terminus, the 612-residue chain is Alpha-glycerophosphate oxidase (612 aa).

An FAD-binding site is contributed by 21–49 (DLLIIGGGITGAGVALQAAASGLDTGLIE). Over residues 399–408 (ETSTSEKELD) the composition is skewed to basic and acidic residues. The tract at residues 399–418 (ETSTSEKELDPSAVSRGSSF) is disordered.

Belongs to the FAD-dependent glycerol-3-phosphate dehydrogenase family. Requires FAD as cofactor.

The protein localises to the cytoplasm. It carries out the reaction sn-glycerol 3-phosphate + O2 = dihydroxyacetone phosphate + H2O2. The polypeptide is Alpha-glycerophosphate oxidase (glpO) (Streptococcus pyogenes serotype M1).